The following is an 85-amino-acid chain: Coiled-coil-helix-coiled-coil-helix domain-containing protein 7 (85 aa).

The 43-residue stretch at 13–55 (INPCLSESDASTRCLDENNYDKERCSTYFLKYKNCRKFWHSIM) folds into the CHCH domain. 2 consecutive short sequence motifs (cx9C motif) follow at residues 16–26 (CLSESDASTRC) and 37–47 (CSTYFLKYKNC). 2 cysteine pairs are disulfide-bonded: cysteine 16-cysteine 47 and cysteine 26-cysteine 37.

Belongs to the CHCHD7 family. In terms of assembly, monomer.

It is found in the mitochondrion intermembrane space. The polypeptide is Coiled-coil-helix-coiled-coil-helix domain-containing protein 7 (CHCHD7) (Macaca fascicularis (Crab-eating macaque)).